The primary structure comprises 338 residues: Glycerol-3-phosphate dehydrogenase [NAD(P)+] (338 aa).

NADPH contacts are provided by Ser-14, Tyr-15, His-35, and Lys-109. Sn-glycerol 3-phosphate-binding residues include Lys-109, Gly-138, and Thr-140. Ala-142 provides a ligand contact to NADPH. Sn-glycerol 3-phosphate is bound by residues Lys-194, Asp-247, Ser-257, Arg-258, and Asn-259. The active-site Proton acceptor is the Lys-194. Arg-258 is a binding site for NADPH. Positions 282 and 284 each coordinate NADPH.

It belongs to the NAD-dependent glycerol-3-phosphate dehydrogenase family.

Its subcellular location is the cytoplasm. It catalyses the reaction sn-glycerol 3-phosphate + NAD(+) = dihydroxyacetone phosphate + NADH + H(+). It carries out the reaction sn-glycerol 3-phosphate + NADP(+) = dihydroxyacetone phosphate + NADPH + H(+). The protein operates within membrane lipid metabolism; glycerophospholipid metabolism. Catalyzes the reduction of the glycolytic intermediate dihydroxyacetone phosphate (DHAP) to sn-glycerol 3-phosphate (G3P), the key precursor for phospholipid synthesis. The protein is Glycerol-3-phosphate dehydrogenase [NAD(P)+] of Shewanella baltica (strain OS195).